A 398-amino-acid polypeptide reads, in one-letter code: Acetate kinase (398 aa).

Asn10 provides a ligand contact to Mg(2+). Lys17 contributes to the ATP binding site. Arg89 provides a ligand contact to substrate. The Proton donor/acceptor role is filled by Asp148. Residues 208–212, 283–285, and 331–335 each bind ATP; these read HLGNG, DCR, and GIGEN. Residue Glu385 coordinates Mg(2+).

It belongs to the acetokinase family. In terms of assembly, homodimer. Requires Mg(2+) as cofactor. Mn(2+) serves as cofactor.

The protein localises to the cytoplasm. It catalyses the reaction acetate + ATP = acetyl phosphate + ADP. Its pathway is metabolic intermediate biosynthesis; acetyl-CoA biosynthesis; acetyl-CoA from acetate: step 1/2. Catalyzes the formation of acetyl phosphate from acetate and ATP. Can also catalyze the reverse reaction. The sequence is that of Acetate kinase from Histophilus somni (strain 129Pt) (Haemophilus somnus).